The sequence spans 125 residues: UPF0102 protein CCNA_00142 (125 aa).

Belongs to the UPF0102 family.

This Caulobacter vibrioides (strain NA1000 / CB15N) (Caulobacter crescentus) protein is UPF0102 protein CCNA_00142.